A 446-amino-acid chain; its full sequence is MATQSSPVITDMKVIPVAGHDSMLLNIGGAHNAYFTRNIVVLTDNAGHTGIGEAPGGDVIYQTLVDAIPMVLGQEVARLNKVVQQVHKGNQAADFDTFGKGAWTFELRVNAVAALEAALLDLLGKALNVPVCELLGPGKQREAITVLGYLFYIGDRTKTDLPYVENTPGNHEWYQLRHQKAMNSEAVVRLAEASQDRYGFKDFKLKGGVLPGEQEIDTVRALKKRFPDARITVDPNGAWLLDEAISLCKGLNDVLTYAEDPCGAEQGFSGREVMAEFRRATGLPVATNMIATNWREMGHAVMLNAVDIPLADPHFWTLSGAVRVAQLCDDWGLTWGCHSNNHFDISLAMFTHVGAAAPGNPTAIDTHWIWQEGDCRLTQNPLEIKNGKIAVPDAPGLGVELDWEQVQKAHEAYKRLPGGARNDAGPMQYLIPGWTFDRKRPVFGRH.

Histidine 31, threonine 104, tyrosine 149, and lysine 204 together coordinate substrate. The Proton acceptor role is filled by lysine 206. 3 residues coordinate Mg(2+): aspartate 234, glutamate 265, and asparagine 288. 234–236 (DPN) lines the substrate pocket. Substrate is bound by residues asparagine 288, 338–340 (HSN), histidine 367, and arginine 421. Histidine 338 acts as the Proton acceptor in catalysis.

It belongs to the mandelate racemase/muconate lactonizing enzyme family. GlucD subfamily. A divalent metal cation is required as a cofactor.

Functionally, does not seem to have an in-vivo activity on glucarate or idarate. Its real substrate is unknown. The protein is Glucarate dehydratase-related protein (gudX) of Escherichia coli (strain K12).